The sequence spans 901 residues: DNA mismatch repair protein MutS (901 aa).

Polar residues predominate over residues 1–12 (MKYSASTSTPKS). Positions 1–25 (MKYSASTSTPKSAQPKEEELENSLP) are disordered. 679–686 (GPNASGKS) provides a ligand contact to ATP.

It belongs to the DNA mismatch repair MutS family.

In terms of biological role, this protein is involved in the repair of mismatches in DNA. It is possible that it carries out the mismatch recognition step. This protein has a weak ATPase activity. This is DNA mismatch repair protein MutS from Trichodesmium erythraeum (strain IMS101).